The chain runs to 257 residues: Probable pectate lyase G (257 aa).

The N-terminal stretch at M1–A24 is a signal peptide.

The protein belongs to the polysaccharide lyase 3 family. Ca(2+) serves as cofactor.

It is found in the secreted. It catalyses the reaction Eliminative cleavage of (1-&gt;4)-alpha-D-galacturonan to give oligosaccharides with 4-deoxy-alpha-D-galact-4-enuronosyl groups at their non-reducing ends.. In terms of biological role, pectinolytic enzyme consist of four classes of enzymes: pectin lyase, polygalacturonase, pectin methylesterase and rhamnogalacturonase. Among pectinolytic enzymes, pectin lyase is the most important in depolymerization of pectin, since it cleaves internal glycosidic bonds of highly methylated pectins. Favors pectate, the anion, over pectin, the methyl ester. This Emericella nidulans (strain FGSC A4 / ATCC 38163 / CBS 112.46 / NRRL 194 / M139) (Aspergillus nidulans) protein is Probable pectate lyase G (plyG).